A 242-amino-acid chain; its full sequence is Uridylate kinase (242 aa).

12 to 15 (KLSG) provides a ligand contact to ATP. The involved in allosteric activation by GTP stretch occupies residues 20–25 (GEKGYG). Gly-55 is a binding site for UMP. ATP is bound by residues Gly-56 and Arg-60. Residues Asp-75 and 136–143 (TGNPYFST) each bind UMP. The ATP site is built by Tyr-169 and Asp-172.

The protein belongs to the UMP kinase family. Homohexamer.

It is found in the cytoplasm. It catalyses the reaction UMP + ATP = UDP + ADP. Its pathway is pyrimidine metabolism; CTP biosynthesis via de novo pathway; UDP from UMP (UMPK route): step 1/1. With respect to regulation, allosterically activated by GTP. Inhibited by UTP. Its function is as follows. Catalyzes the reversible phosphorylation of UMP to UDP. The protein is Uridylate kinase of Carboxydothermus hydrogenoformans (strain ATCC BAA-161 / DSM 6008 / Z-2901).